A 195-amino-acid chain; its full sequence is Small ribosomal subunit protein uS4 (195 aa).

One can recognise an S4 RNA-binding domain in the interval 88–150 (RRLENVVYRL…SKNVELIKLA (63 aa)).

Belongs to the universal ribosomal protein uS4 family. Part of the 30S ribosomal subunit. Contacts protein S5. The interaction surface between S4 and S5 is involved in control of translational fidelity.

Functionally, one of the primary rRNA binding proteins, it binds directly to 16S rRNA where it nucleates assembly of the body of the 30S subunit. Its function is as follows. With S5 and S12 plays an important role in translational accuracy. The polypeptide is Small ribosomal subunit protein uS4 (Fusobacterium nucleatum subsp. nucleatum (strain ATCC 25586 / DSM 15643 / BCRC 10681 / CIP 101130 / JCM 8532 / KCTC 2640 / LMG 13131 / VPI 4355)).